The following is a 248-amino-acid chain: Small ribosomal subunit protein eS6 (248 aa).

Positions 213–248 (LLAQRKKESKAKREEAKRRRSASMRESKSSISSDKK) are disordered. A compositionally biased stretch (basic and acidic residues) spans 223 to 248 (AKREEAKRRRSASMRESKSSISSDKK).

Belongs to the eukaryotic ribosomal protein eS6 family. Component of the small ribosomal subunit. Part of the small subunit (SSU) processome, composed of more than 70 proteins and the RNA chaperone small nucleolar RNA (snoRNA) U3. In terms of processing, ribosomal protein S6 is the major substrate of protein kinases in eukaryote ribosomes.

The protein localises to the cytoplasm. Its subcellular location is the nucleus. The protein resides in the nucleolus. Component of the 40S small ribosomal subunit. Plays an important role in controlling cell growth and proliferation through the selective translation of particular classes of mRNA. Part of the small subunit (SSU) processome, first precursor of the small eukaryotic ribosomal subunit. During the assembly of the SSU processome in the nucleolus, many ribosome biogenesis factors, an RNA chaperone and ribosomal proteins associate with the nascent pre-rRNA and work in concert to generate RNA folding, modifications, rearrangements and cleavage as well as targeted degradation of pre-ribosomal RNA by the RNA exosome. This is Small ribosomal subunit protein eS6 (RpS6) from Glossina morsitans morsitans (Savannah tsetse fly).